We begin with the raw amino-acid sequence, 398 residues long: Galactose-3-O-sulfotransferase 2 (398 aa).

Topologically, residues 1–11 (MLSALGGLQRC) are cytoplasmic. Residues 12-29 (FWAILLLALTVSLLAGFL) traverse the membrane as a helical; Signal-anchor for type II membrane protein segment. At 30-398 (HKDVRLLMPL…PPKNIPFLGA (369 aa)) the chain is on the lumenal side. Residues N77, N133, N180, N288, N330, and N360 are each glycosylated (N-linked (GlcNAc...) asparagine).

The protein belongs to the galactose-3-O-sulfotransferase family.

It is found in the golgi apparatus. It localises to the golgi stack membrane. The protein operates within protein modification; carbohydrate sulfation. With respect to regulation, strongly inhibited by Cu(2+) and Zn(2+). Functionally, transfers a sulfate group to the hydroxyl group at C3 of non-reducing beta-galactosyl residues. Acts both on type 1 (Gal-beta-1,3-GlcNAc) and type 2 (Gal-beta-1,4-GlcNAc) chains with similar efficiency. The chain is Galactose-3-O-sulfotransferase 2 (GAL3ST2) from Sus scrofa (Pig).